We begin with the raw amino-acid sequence, 214 residues long: Phosphatidylserine decarboxylase proenzyme (214 aa).

Ser182 (schiff-base intermediate with substrate; via pyruvic acid) is an active-site residue. Ser182 carries the pyruvic acid (Ser); by autocatalysis modification.

The protein belongs to the phosphatidylserine decarboxylase family. PSD-A subfamily. Heterodimer of a large membrane-associated beta subunit and a small pyruvoyl-containing alpha subunit. Pyruvate serves as cofactor. Is synthesized initially as an inactive proenzyme. Formation of the active enzyme involves a self-maturation process in which the active site pyruvoyl group is generated from an internal serine residue via an autocatalytic post-translational modification. Two non-identical subunits are generated from the proenzyme in this reaction, and the pyruvate is formed at the N-terminus of the alpha chain, which is derived from the carboxyl end of the proenzyme. The post-translation cleavage follows an unusual pathway, termed non-hydrolytic serinolysis, in which the side chain hydroxyl group of the serine supplies its oxygen atom to form the C-terminus of the beta chain, while the remainder of the serine residue undergoes an oxidative deamination to produce ammonia and the pyruvoyl prosthetic group on the alpha chain.

It is found in the cell membrane. The catalysed reaction is a 1,2-diacyl-sn-glycero-3-phospho-L-serine + H(+) = a 1,2-diacyl-sn-glycero-3-phosphoethanolamine + CO2. It functions in the pathway phospholipid metabolism; phosphatidylethanolamine biosynthesis; phosphatidylethanolamine from CDP-diacylglycerol: step 2/2. Functionally, catalyzes the formation of phosphatidylethanolamine (PtdEtn) from phosphatidylserine (PtdSer). The polypeptide is Phosphatidylserine decarboxylase proenzyme (Burkholderia ambifaria (strain MC40-6)).